Here is a 179-residue protein sequence, read N- to C-terminus: Bifunctional protein PyrR (179 aa).

Residues 97–109 (IILTDDVLYTGRT) carry the PRPP-binding motif.

Belongs to the purine/pyrimidine phosphoribosyltransferase family. PyrR subfamily.

It carries out the reaction UMP + diphosphate = 5-phospho-alpha-D-ribose 1-diphosphate + uracil. Functionally, regulates the transcription of the pyrimidine nucleotide (pyr) operon in response to exogenous pyrimidines. Also displays a weak uracil phosphoribosyltransferase activity which is not physiologically significant. This Elusimicrobium minutum (strain Pei191) protein is Bifunctional protein PyrR.